The following is a 122-amino-acid chain: DLWQFGQMILKETGKLPFPYYTTYGCYCGWGGQGQPKDATDRCCFVHDCCYGKLTNCKPKTDRYSYSRENGVIICGEGTPCEKQICECDKAAAVCFRENLRTYKXXYMAYPDVLCKKPAEKC.

7 disulfides stabilise this stretch: C26–C115, C28–C44, C43–C95, C49–C122, C50–C88, C57–C81, and C75–C86. 3 residues coordinate Ca(2+): Y27, G29, and G31. H47 is a catalytic residue. Residue D48 coordinates Ca(2+). Residue D89 is part of the active site.

It belongs to the phospholipase A2 family. Group II subfamily. D49 sub-subfamily. Requires Ca(2+) as cofactor. As to expression, expressed by the venom gland.

The protein resides in the secreted. The catalysed reaction is a 1,2-diacyl-sn-glycero-3-phosphocholine + H2O = a 1-acyl-sn-glycero-3-phosphocholine + a fatty acid + H(+). In terms of biological role, snake venom phospholipase A2 (PLA2) that does not inhibit platelet aggregation. Exhibits cytotoxic and anticoagulant activity. Induces Ehrlich tumor growth but not angiogenesis. PLA2 catalyzes the calcium-dependent hydrolysis of the 2-acyl groups in 3-sn-phosphoglycerides. The sequence is that of Basic phospholipase A2 from Bothrops leucurus (Whitetail lancehead).